A 611-amino-acid polypeptide reads, in one-letter code: Elongation factor 4 (611 aa).

One can recognise a tr-type G domain in the interval 11 to 193 (EKIRNFSIIA…QVVEYVPAPS (183 aa)). GTP-binding positions include 23–28 (DHGKST) and 140–143 (NKID).

The protein belongs to the TRAFAC class translation factor GTPase superfamily. Classic translation factor GTPase family. LepA subfamily.

Its subcellular location is the cell membrane. The enzyme catalyses GTP + H2O = GDP + phosphate + H(+). Required for accurate and efficient protein synthesis under certain stress conditions. May act as a fidelity factor of the translation reaction, by catalyzing a one-codon backward translocation of tRNAs on improperly translocated ribosomes. Back-translocation proceeds from a post-translocation (POST) complex to a pre-translocation (PRE) complex, thus giving elongation factor G a second chance to translocate the tRNAs correctly. Binds to ribosomes in a GTP-dependent manner. In Enterococcus faecalis (strain ATCC 700802 / V583), this protein is Elongation factor 4.